An 89-amino-acid chain; its full sequence is Small ribosomal subunit protein uS15 (89 aa).

It belongs to the universal ribosomal protein uS15 family. As to quaternary structure, part of the 30S ribosomal subunit. Forms a bridge to the 50S subunit in the 70S ribosome, contacting the 23S rRNA.

Its function is as follows. One of the primary rRNA binding proteins, it binds directly to 16S rRNA where it helps nucleate assembly of the platform of the 30S subunit by binding and bridging several RNA helices of the 16S rRNA. Forms an intersubunit bridge (bridge B4) with the 23S rRNA of the 50S subunit in the ribosome. In Laribacter hongkongensis (strain HLHK9), this protein is Small ribosomal subunit protein uS15.